Reading from the N-terminus, the 978-residue chain is Mineralocorticoid receptor (978 aa).

Positions 1–602 (METKGYHSLP…STGSSRPSKI (602 aa)) are modulating. Polar residues predominate over residues 234 to 243 (SLTCSPSVEN). Disordered regions lie at residues 234–331 (SLTC…STVG) and 353–372 (GAIQ…AHDV). 5 positions are modified to phosphoserine: serine 250, serine 259, serine 283, serine 287, and serine 299. Residues 259-300 (SPLSSPLSSMKSPISSPPSHCSVKSPVSSPNNVPLRSSVSSP) are compositionally biased toward low complexity. The span at 301–331 (ANLNNSRCSVSSPSNTNNRSTLSSPTASTVG) shows a compositional bias: polar residues. Zn(2+) contacts are provided by cysteine 603, cysteine 606, cysteine 620, cysteine 623, cysteine 637, cysteine 643, cysteine 653, and cysteine 656. NR C4-type zinc fingers lie at residues 603–623 (CLVC…CGSC) and 637–661 (CAGR…LQKC). The segment at residues 603-666 (CLVCGDEASG…RLQKCLQAGM (64 aa)) is a DNA-binding region (nuclear receptor). A hinge region spans residues 667–719 (NLGARKSKKLGKLKGLHEEQPQQPPPPPPQSPEEGTTYIAPTKEPSVNSALVP). The disordered stretch occupies residues 681 to 706 (GLHEEQPQQPPPPPPQSPEEGTTYIA). Pro residues predominate over residues 688–697 (QQPPPPPPQS). In terms of domain architecture, NR LBD spans 720–958 (QLASITRALT…EFPAMLVEII (239 aa)). 2 residues coordinate 21-hydroxyprogesterone: asparagine 764 and glutamine 770. Positions 764 and 770 each coordinate aldosterone. Progesterone-binding residues include asparagine 764 and glutamine 770. Positions 776-779 (KWAK) are important for coactivator binding. Arginine 811 and threonine 939 together coordinate 21-hydroxyprogesterone. 2 residues coordinate aldosterone: arginine 811 and threonine 939. Progesterone is bound by residues arginine 811 and threonine 939.

Belongs to the nuclear hormone receptor family. NR3 subfamily. In terms of assembly, heteromultimeric cytoplasmic complex with HSP90, HSP70, and FKBP4, in the absence of ligand. After ligand binding, it translocates to the nucleus and binds to DNA as a homodimer and as a heterodimer with NR3C1. Binds the coactivator NCOA2. May interact with HSD11B2 in the absence of ligand. Binds the coactivators NCOA1, TIF1 and NRIP1. Post-translationally, phosphorylated. As to expression, expressed in heart and kidney.

The protein resides in the cytoplasm. The protein localises to the nucleus. Its subcellular location is the endoplasmic reticulum membrane. Its function is as follows. Receptor for both mineralocorticoids (MC) such as aldosterone and glucocorticoids (GC) such as corticosterone or cortisol. Binds to mineralocorticoid response elements (MRE) and transactivates target genes. The effect of MC is to increase ion and water transport and thus raise extracellular fluid volume and blood pressure and lower potassium levels. This chain is Mineralocorticoid receptor (Nr3c2), found in Mus musculus (Mouse).